Reading from the N-terminus, the 617-residue chain is Urocanate reductase (617 aa).

An FMN phosphoryl threonine modification is found at Thr70. Positions 124, 143, 151, 152, 156, 157, and 387 each coordinate FAD. Residue Arg446 is the Proton donor of the active site. FAD-binding residues include His553, Glu582, and Leu598.

The protein belongs to the FAD-dependent oxidoreductase 2 family. FRD/SDH subfamily. It depends on FAD as a cofactor. The cofactor is FMN.

It carries out the reaction dihydrourocanate + A = urocanate + AH2. Catalyzes the two-electron reduction of urocanate to dihydrourocanate (also named imidazole propionate or deamino-histidine). Dihydrourocanate is present at higher concentrations in subjects with type 2 diabetes, and directly impairs glucose tolerance and insulin signaling at the level of insulin receptor substrate (IRS) through activation of p38 gamma (MAPK12)-p62-mTORC1. Therefore, the UrdA enzyme from the gut bacteria L.fermentum strain NBRC 3956 may contribute to the pathogenesis of type 2 diabetes by producing the microbial metabolite dihydrourocanate. This is Urocanate reductase from Limosilactobacillus fermentum (strain NBRC 3956 / LMG 18251) (Lactobacillus fermentum).